Here is a 200-residue protein sequence, read N- to C-terminus: Probable nicotinate-nucleotide adenylyltransferase (200 aa).

The protein belongs to the NadD family.

It catalyses the reaction nicotinate beta-D-ribonucleotide + ATP + H(+) = deamido-NAD(+) + diphosphate. It functions in the pathway cofactor biosynthesis; NAD(+) biosynthesis; deamido-NAD(+) from nicotinate D-ribonucleotide: step 1/1. Catalyzes the reversible adenylation of nicotinate mononucleotide (NaMN) to nicotinic acid adenine dinucleotide (NaAD). The polypeptide is Probable nicotinate-nucleotide adenylyltransferase (Clostridium botulinum (strain Alaska E43 / Type E3)).